Here is a 763-residue protein sequence, read N- to C-terminus: Sphingoid long-chain bases kinase 1 (763 aa).

Positions 34-81 (TGGSQQSSPIVFPEKRNKKVKASSRRGEVTNDPQVKPKPDEHRIDIGG) are disordered. A compositionally biased stretch (basic and acidic residues) spans 58–81 (RRGEVTNDPQVKPKPDEHRIDIGG). The 140-residue stretch at 245-384 (KSAPKMLVIL…TDVFAVEWIH (140 aa)) folds into the DAGKc domain. ATP contacts are provided by residues 255–257 (NPR) and T287. 313–316 (GGDG) serves as a coordination point for substrate. Catalysis depends on D315, which acts as the Proton donor/acceptor. Residues E320, 345–347 (GSD), and R418 contribute to the ATP site. Residues 561–603 (MGLTSVQDPPTRCSWGNTGGQDREDISSTVSDPGPIWDAGPKW) form a disordered region. Residue 733 to 735 (DGE) participates in ATP binding.

Expressed in roots, stems, leaves and at higher levels in flowers.

Its function is as follows. Involved in the production of sphingolipid metabolites. Active on sphingosine, phytosphingosine (PHS, 4-hydroxysphinganine), D-erythro-dihydrosphingosine, D-erythro-sphingosine and trans-4, trans-8-sphingadienine, an LCB found exclusively in plants, but not on N-acetyl-dihydrosphingosine (C2-dihydroceramide) and D-threo-dihydrosphingosine. The polypeptide is Sphingoid long-chain bases kinase 1 (LCBK1) (Arabidopsis thaliana (Mouse-ear cress)).